The sequence spans 31 residues: Diuretic hormone class 2 (31 aa).

Pro-31 carries the proline amide modification.

This sequence belongs to the diuretic hormone class 2 family.

The protein resides in the secreted. In terms of biological role, regulation of fluid secretion. Stimulates primary urine secretion by Malpighian tubules and causes a dose-dependent stimulation of cAMP levels in the tubules. Has a nonselective effect on Na(+)/K(+) ion transport. In vitro, primarily elevates intracellular Ca(2+). The protein is Diuretic hormone class 2 of Apis mellifera (Honeybee).